A 117-amino-acid chain; its full sequence is Fluoride-specific ion channel FluC 2 (117 aa).

The next 4 membrane-spanning stretches (helical) occupy residues 4-24 (FLIG…GDII), 31-51 (KFPW…GIIT), 59-79 (LSMI…TFMY), and 94-114 (LIYI…GEFI). Gly-69 and Thr-72 together coordinate Na(+).

The protein belongs to the fluoride channel Fluc/FEX (TC 1.A.43) family.

It localises to the cell membrane. The catalysed reaction is fluoride(in) = fluoride(out). With respect to regulation, na(+) is not transported, but it plays an essential structural role and its presence is essential for fluoride channel function. Its function is as follows. Fluoride-specific ion channel. Important for reducing fluoride concentration in the cell, thus reducing its toxicity. In Clostridium acetobutylicum (strain ATCC 824 / DSM 792 / JCM 1419 / IAM 19013 / LMG 5710 / NBRC 13948 / NRRL B-527 / VKM B-1787 / 2291 / W), this protein is Fluoride-specific ion channel FluC 2.